A 228-amino-acid polypeptide reads, in one-letter code: L-ribulose-5-phosphate 4-epimerase UlaF (228 aa).

Substrate contacts are provided by residues 26-27 (GN), 43-44 (SG), and 72-73 (SS). Asp-74, His-93, and His-95 together coordinate Zn(2+). The active-site Proton donor/acceptor is Asp-118. His-167 contributes to the Zn(2+) binding site. The active-site Proton donor/acceptor is the Tyr-225.

It belongs to the aldolase class II family. AraD/FucA subfamily. Requires Zn(2+) as cofactor.

The catalysed reaction is L-ribulose 5-phosphate = D-xylulose 5-phosphate. It functions in the pathway cofactor degradation; L-ascorbate degradation; D-xylulose 5-phosphate from L-ascorbate: step 4/4. Functionally, catalyzes the isomerization of L-ribulose 5-phosphate to D-xylulose 5-phosphate. Is involved in the anaerobic L-ascorbate utilization. In Shigella dysenteriae serotype 1 (strain Sd197), this protein is L-ribulose-5-phosphate 4-epimerase UlaF.